The primary structure comprises 44 residues: Antibacterial protein 3 (44 aa).

An N-formylmethionine modification is found at methionine 1.

The protein belongs to the staphylococcal hemolytic protein family.

Its subcellular location is the secreted. Functionally, has hemolytic activity and also inhibits the growth of gonococci. In Staphylococcus haemolyticus, this protein is Antibacterial protein 3.